Here is a 497-residue protein sequence, read N- to C-terminus: ATP synthase subunit alpha 2 (497 aa).

167 to 174 (GERATGKT) is a binding site for ATP.

Belongs to the ATPase alpha/beta chains family. In terms of assembly, F-type ATPases have 2 components, CF(1) - the catalytic core - and CF(0) - the membrane proton channel. CF(1) has five subunits: alpha(3), beta(3), gamma(1), delta(1), epsilon(1). CF(0) has four main subunits: a(1), b(1), b'(1) and c(9-12).

It is found in the cell inner membrane. The enzyme catalyses ATP + H2O + 4 H(+)(in) = ADP + phosphate + 5 H(+)(out). Produces ATP from ADP in the presence of a proton gradient across the membrane. The alpha chain is a regulatory subunit. The protein is ATP synthase subunit alpha 2 of Cereibacter sphaeroides (strain ATCC 17023 / DSM 158 / JCM 6121 / CCUG 31486 / LMG 2827 / NBRC 12203 / NCIMB 8253 / ATH 2.4.1.) (Rhodobacter sphaeroides).